The primary structure comprises 178 residues: Ribosome maturation factor RimM (178 aa).

The PRC barrel domain occupies 95-174 (EGQHFWFNVI…IVHVKDAKDI (80 aa)).

The protein belongs to the RimM family. As to quaternary structure, binds ribosomal protein uS19.

The protein resides in the cytoplasm. Functionally, an accessory protein needed during the final step in the assembly of 30S ribosomal subunit, possibly for assembly of the head region. Essential for efficient processing of 16S rRNA. May be needed both before and after RbfA during the maturation of 16S rRNA. It has affinity for free ribosomal 30S subunits but not for 70S ribosomes. This Sulfurovum sp. (strain NBC37-1) protein is Ribosome maturation factor RimM.